The sequence spans 1033 residues: Isoleucine--tRNA ligase 2 (1033 aa).

The 'HIGH' region motif lies at P47–H57. Residues K590–S594 carry the 'KMSKS' region motif. K593 contributes to the ATP binding site.

Belongs to the class-I aminoacyl-tRNA synthetase family. IleS type 2 subfamily. As to quaternary structure, monomer. The cofactor is Zn(2+).

It is found in the cytoplasm. It carries out the reaction tRNA(Ile) + L-isoleucine + ATP = L-isoleucyl-tRNA(Ile) + AMP + diphosphate. Functionally, catalyzes the attachment of isoleucine to tRNA(Ile). As IleRS can inadvertently accommodate and process structurally similar amino acids such as valine, to avoid such errors it has two additional distinct tRNA(Ile)-dependent editing activities. One activity is designated as 'pretransfer' editing and involves the hydrolysis of activated Val-AMP. The other activity is designated 'posttransfer' editing and involves deacylation of mischarged Val-tRNA(Ile). This chain is Isoleucine--tRNA ligase 2, found in Bacillus anthracis.